The primary structure comprises 214 residues: N-(5'-phosphoribosyl)anthranilate isomerase (214 aa).

Belongs to the TrpF family.

It catalyses the reaction N-(5-phospho-beta-D-ribosyl)anthranilate = 1-(2-carboxyphenylamino)-1-deoxy-D-ribulose 5-phosphate. The protein operates within amino-acid biosynthesis; L-tryptophan biosynthesis; L-tryptophan from chorismate: step 3/5. The sequence is that of N-(5'-phosphoribosyl)anthranilate isomerase from Halorubrum lacusprofundi (strain ATCC 49239 / DSM 5036 / JCM 8891 / ACAM 34).